The sequence spans 126 residues: Glycine cleavage system H protein (126 aa).

A Lipoyl-binding domain is found at 23-105 (AATVGITDHA…YGEGWLLRVR (83 aa)). An N6-lipoyllysine modification is found at lysine 64.

The protein belongs to the GcvH family. The glycine cleavage system is composed of four proteins: P, T, L and H. It depends on (R)-lipoate as a cofactor.

Its function is as follows. The glycine cleavage system catalyzes the degradation of glycine. The H protein shuttles the methylamine group of glycine from the P protein to the T protein. This chain is Glycine cleavage system H protein, found in Rubrobacter xylanophilus (strain DSM 9941 / JCM 11954 / NBRC 16129 / PRD-1).